A 681-amino-acid chain; its full sequence is Proline-rich receptor-like protein kinase PERK8 (681 aa).

Positions 1-11 (MSLVPPLPILS) are enriched in pro residues. Residues 1-231 (MSLVPPLPIL…TLPSSSPGKS (231 aa)) form a disordered region. Residues 1 to 237 (MSLVPPLPIL…PGKSEVGTGG (237 aa)) are Extracellular-facing. The N-linked (GlcNAc...) asparagine glycan is linked to N16. Residues 21 to 163 (APPPLQTQPT…SPPKPSPSTP (143 aa)) are compositionally biased toward pro residues. Low complexity predominate over residues 177 to 191 (TSASPPSSNPTDPST). Positions 192 to 201 (LAPPPTPLPV) are enriched in pro residues. A compositionally biased stretch (polar residues) spans 214–229 (PASNNGNNTLPSSSPG). N220 carries N-linked (GlcNAc...) asparagine glycosylation. A helical membrane pass occupies residues 238 to 258 (IVAIGVIVGLVFLSLFVMGVW). Over 259 to 681 (FTRKRKRKDP…GSRDQSRFVP (423 aa)) the chain is Cytoplasmic. In terms of domain architecture, Protein kinase spans 339–617 (FSEKNLLGEG…SQVVRALDTL (279 aa)). ATP-binding positions include 345-353 (LGEGGFGCV) and K367. A Phosphotyrosine modification is found at Y412. D463 (proton acceptor) is an active-site residue. Phosphoserine occurs at positions 467 and 498. Phosphothreonine occurs at positions 499 and 504. The residue at position 512 (Y512) is a Phosphotyrosine.

It belongs to the protein kinase superfamily. Ser/Thr protein kinase family. Interacts with KIPK1 and KIPK2 (via its cytosolic domain). Mostly expressed in seedlings, roots, inflorescence bolts and flower buds.

The protein localises to the cell membrane. It carries out the reaction L-seryl-[protein] + ATP = O-phospho-L-seryl-[protein] + ADP + H(+). The enzyme catalyses L-threonyl-[protein] + ATP = O-phospho-L-threonyl-[protein] + ADP + H(+). Could be involved in the negative regulation of root growth. The chain is Proline-rich receptor-like protein kinase PERK8 (PERK8) from Arabidopsis thaliana (Mouse-ear cress).